Consider the following 1058-residue polypeptide: Carbamoyl phosphate synthase large chain (1058 aa).

Residues M1–E401 form a carboxyphosphate synthetic domain region. ATP is bound by residues R129, R169, G175, G176, R208, I210, E215, G241, I242, H243, Q284, and E298. The 195-residue stretch at K133–V327 folds into the ATP-grasp 1 domain. Mg(2+) is bound by residues Q284, E298, and N300. Residues Q284, E298, and N300 each coordinate Mn(2+). The oligomerization domain stretch occupies residues I402 to S546. The tract at residues V547–N929 is carbamoyl phosphate synthetic domain. Residues E671–L861 form the ATP-grasp 2 domain. Positions 707, 746, 748, 752, 777, 778, 779, 780, 820, and 832 each coordinate ATP. Positions 820, 832, and 834 each coordinate Mg(2+). 3 residues coordinate Mn(2+): Q820, E832, and N834. In terms of domain architecture, MGS-like spans S930–I1058. Positions S930–I1058 are allosteric domain.

Belongs to the CarB family. As to quaternary structure, composed of two chains; the small (or glutamine) chain promotes the hydrolysis of glutamine to ammonia, which is used by the large (or ammonia) chain to synthesize carbamoyl phosphate. Tetramer of heterodimers (alpha,beta)4. Requires Mg(2+) as cofactor. Mn(2+) serves as cofactor.

The enzyme catalyses hydrogencarbonate + L-glutamine + 2 ATP + H2O = carbamoyl phosphate + L-glutamate + 2 ADP + phosphate + 2 H(+). It catalyses the reaction hydrogencarbonate + NH4(+) + 2 ATP = carbamoyl phosphate + 2 ADP + phosphate + 2 H(+). It participates in amino-acid biosynthesis; L-arginine biosynthesis; carbamoyl phosphate from bicarbonate: step 1/1. It functions in the pathway pyrimidine metabolism; UMP biosynthesis via de novo pathway; (S)-dihydroorotate from bicarbonate: step 1/3. Functionally, large subunit of the glutamine-dependent carbamoyl phosphate synthetase (CPSase). CPSase catalyzes the formation of carbamoyl phosphate from the ammonia moiety of glutamine, carbonate, and phosphate donated by ATP, constituting the first step of 2 biosynthetic pathways, one leading to arginine and/or urea and the other to pyrimidine nucleotides. The large subunit (synthetase) binds the substrates ammonia (free or transferred from glutamine from the small subunit), hydrogencarbonate and ATP and carries out an ATP-coupled ligase reaction, activating hydrogencarbonate by forming carboxy phosphate which reacts with ammonia to form carbamoyl phosphate. The chain is Carbamoyl phosphate synthase large chain from Streptococcus pyogenes serotype M6 (strain ATCC BAA-946 / MGAS10394).